The chain runs to 304 residues: Glutaminase (304 aa).

Positions 63, 114, 158, 165, 189, 240, and 258 each coordinate substrate.

This sequence belongs to the glutaminase family. Homotetramer.

It catalyses the reaction L-glutamine + H2O = L-glutamate + NH4(+). In Shewanella oneidensis (strain ATCC 700550 / JCM 31522 / CIP 106686 / LMG 19005 / NCIMB 14063 / MR-1), this protein is Glutaminase.